Reading from the N-terminus, the 239-residue chain is Adapter protein MecA (239 aa).

A compositionally biased stretch (basic and acidic residues) spans 118–128 (EQRTKEKEAQG). Residues 118-137 (EQRTKEKEAQGSKRQKSSAR) are disordered.

It belongs to the MecA family. Homodimer.

Functionally, enables the recognition and targeting of unfolded and aggregated proteins to the ClpC protease or to other proteins involved in proteolysis. The sequence is that of Adapter protein MecA from Staphylococcus aureus (strain JH1).